Consider the following 458-residue polypeptide: tRNA modification GTPase MnmE (458 aa).

(6S)-5-formyl-5,6,7,8-tetrahydrofolate is bound by residues R26, E88, and R127. Residues 224 to 378 (GLSTAIIGRP…IEERINDIFF (155 aa)) enclose the TrmE-type G domain. Residue N234 participates in K(+) binding. GTP contacts are provided by residues 234 to 239 (NVGKSS), 253 to 259 (TDIEGTT), and 278 to 281 (DTAG). S238 provides a ligand contact to Mg(2+). T253, I255, and T258 together coordinate K(+). Residue T259 coordinates Mg(2+). K458 contributes to the (6S)-5-formyl-5,6,7,8-tetrahydrofolate binding site.

The protein belongs to the TRAFAC class TrmE-Era-EngA-EngB-Septin-like GTPase superfamily. TrmE GTPase family. Homodimer. Heterotetramer of two MnmE and two MnmG subunits. K(+) is required as a cofactor.

It is found in the cytoplasm. Exhibits a very high intrinsic GTPase hydrolysis rate. Involved in the addition of a carboxymethylaminomethyl (cmnm) group at the wobble position (U34) of certain tRNAs, forming tRNA-cmnm(5)s(2)U34. This is tRNA modification GTPase MnmE from Streptococcus agalactiae serotype III (strain NEM316).